An 811-amino-acid polypeptide reads, in one-letter code: DEP domain-containing protein 1A (811 aa).

One can recognise a DEP domain in the interval 24–108 (FRAGMPLRKH…DNNQLFRFPA (85 aa)). One can recognise a Rho-GAP domain in the interval 281–321 (DYFLDLPEPLLTFEYYELFVNILVVCGYITVSDRSSGIHKI). Phosphoserine is present on serine 512. Residues 598–653 (AIDALQLCCLLLPPPNRRKLQLLMRMISRMSQNVDMPKLHDAMGTRSLMIHTFSRC) are interaction with ZNF224.

In terms of assembly, isoform 2 and isoform 5 can form homodimers and heterodimers. Interacts with ZNF224. As to expression, expressed in testis. Up-regulated in bladder cancer cells (at protein level).

It localises to the nucleus. Its function is as follows. May be involved in transcriptional regulation as a transcriptional corepressor. The DEPDC1A-ZNF224 complex may play a critical role in bladder carcinogenesis by repressing the transcription of the A20 gene, leading to transport of NF-KB protein into the nucleus, resulting in suppression of apoptosis of bladder cancer cells. The protein is DEP domain-containing protein 1A (DEPDC1) of Homo sapiens (Human).